A 468-amino-acid polypeptide reads, in one-letter code: Ribulose bisphosphate carboxylase large chain (468 aa).

Residue Lys4 is modified to N6,N6,N6-trimethyllysine. Substrate is bound by residues Asn113 and Thr163. The active-site Proton acceptor is the Lys165. Lys167 contributes to the substrate binding site. The Mg(2+) site is built by Lys191, Asp193, and Glu194. The residue at position 191 (Lys191) is an N6-carboxylysine. His284 serves as the catalytic Proton acceptor. Residues Arg285, His317, and Ser369 each contribute to the substrate site.

It belongs to the RuBisCO large chain family. Type I subfamily. In terms of assembly, heterohexadecamer of 8 large chains and 8 small chains; disulfide-linked. The disulfide link is formed within the large subunit homodimers. The cofactor is Mg(2+). In terms of processing, the disulfide bond which can form in the large chain dimeric partners within the hexadecamer appears to be associated with oxidative stress and protein turnover.

It is found in the plastid. Its subcellular location is the chloroplast. The catalysed reaction is 2 (2R)-3-phosphoglycerate + 2 H(+) = D-ribulose 1,5-bisphosphate + CO2 + H2O. It catalyses the reaction D-ribulose 1,5-bisphosphate + O2 = 2-phosphoglycolate + (2R)-3-phosphoglycerate + 2 H(+). In terms of biological role, ruBisCO catalyzes two reactions: the carboxylation of D-ribulose 1,5-bisphosphate, the primary event in carbon dioxide fixation, as well as the oxidative fragmentation of the pentose substrate in the photorespiration process. Both reactions occur simultaneously and in competition at the same active site. This is Ribulose bisphosphate carboxylase large chain from Pandorea jasminoides (Bower vine).